The primary structure comprises 65 residues: Large ribosomal subunit protein bL35 (65 aa).

Residues 1-22 (MPKLKTKSGAAKRFKKTGKGGF) form a disordered region.

The protein belongs to the bacterial ribosomal protein bL35 family.

The polypeptide is Large ribosomal subunit protein bL35 (Francisella philomiragia subsp. philomiragia (strain ATCC 25017 / CCUG 19701 / FSC 153 / O#319-036)).